The chain runs to 435 residues: Adenylosuccinate synthetase (435 aa).

GTP contacts are provided by residues glycine 17–lysine 23 and glycine 47–threonine 49. Residue aspartate 18 is the Proton acceptor of the active site. Residues aspartate 18 and glycine 47 each coordinate Mg(2+). IMP contacts are provided by residues aspartate 18–lysine 21, asparagine 45–histidine 48, threonine 138, arginine 152, asparagine 232, threonine 247, and arginine 311. The Proton donor role is filled by histidine 48. Valine 307 to arginine 313 contributes to the substrate binding site. GTP-binding positions include arginine 313, lysine 339–aspartate 341, and glycine 421–glycine 423.

It belongs to the adenylosuccinate synthetase family. Homodimer. It depends on Mg(2+) as a cofactor.

Its subcellular location is the cytoplasm. The catalysed reaction is IMP + L-aspartate + GTP = N(6)-(1,2-dicarboxyethyl)-AMP + GDP + phosphate + 2 H(+). The protein operates within purine metabolism; AMP biosynthesis via de novo pathway; AMP from IMP: step 1/2. Plays an important role in the de novo pathway and in the salvage pathway of purine nucleotide biosynthesis. Catalyzes the first committed step in the biosynthesis of AMP from IMP. The chain is Adenylosuccinate synthetase from Caenorhabditis briggsae.